Reading from the N-terminus, the 343-residue chain is Phenylalanine--tRNA ligase alpha subunit (343 aa).

E256 serves as a coordination point for Mg(2+).

The protein belongs to the class-II aminoacyl-tRNA synthetase family. Phe-tRNA synthetase alpha subunit type 1 subfamily. Tetramer of two alpha and two beta subunits. Mg(2+) is required as a cofactor.

The protein resides in the cytoplasm. It catalyses the reaction tRNA(Phe) + L-phenylalanine + ATP = L-phenylalanyl-tRNA(Phe) + AMP + diphosphate + H(+). The sequence is that of Phenylalanine--tRNA ligase alpha subunit from Phytoplasma australiense.